The sequence spans 181 residues: I-Kappa-B like protein C2 (181 aa).

ANK repeat units lie at residues 54–86, 91–121, and 125–154; these read DGKX…DINS, DGNT…DMEI, and ARKT…RCDV.

This sequence belongs to the polydnaviridae I-Kappa-B-like protein family.

In terms of biological role, suppresses the host immune response through NF-kappa-B inactivation. Possesses ankyrin repeat domains required for NF-kappa-B binding but lacks the regulatory regions required for dissociation from NF-kappa-B and degradation. Therefore, prevents host NF-kappa-B release and subsequent activation. This is I-Kappa-B like protein C2 (C2) from Microplitis demolitor (Parasitoid wasp).